Reading from the N-terminus, the 241-residue chain is Methylthioribulose-1-phosphate dehydratase (241 aa).

A substrate-binding site is contributed by cysteine 102. The Zn(2+) site is built by histidine 120, histidine 122, and histidine 199.

It belongs to the aldolase class II family. MtnB subfamily. Zn(2+) serves as cofactor.

It is found in the cytoplasm. The enzyme catalyses 5-(methylsulfanyl)-D-ribulose 1-phosphate = 5-methylsulfanyl-2,3-dioxopentyl phosphate + H2O. It participates in amino-acid biosynthesis; L-methionine biosynthesis via salvage pathway; L-methionine from S-methyl-5-thio-alpha-D-ribose 1-phosphate: step 2/6. Its function is as follows. Catalyzes the dehydration of methylthioribulose-1-phosphate (MTRu-1-P) into 2,3-diketo-5-methylthiopentyl-1-phosphate (DK-MTP-1-P). This Coprinopsis cinerea (strain Okayama-7 / 130 / ATCC MYA-4618 / FGSC 9003) (Inky cap fungus) protein is Methylthioribulose-1-phosphate dehydratase.